Consider the following 75-residue polypeptide: Lipid-anchored plasma membrane protein CPP2 (75 aa).

Residues 1 to 43 are disordered; it reads MSQQQGYYQQGPPQQGYYQQGPPQQGYYQQGPPQQGYPQQQPV. 3 consecutive repeat copies span residues 4 to 13, 14 to 23, and 24 to 33. The interval 4-33 is 3 X 10 AA tandem repeats of Q-Q-G-Y-Y-Q-Q-G-P-P; sequence QQGYYQQGPPQQGYYQQGPPQQGYYQQGPP.

It belongs to the CYSTM1 family. In terms of processing, palmitoylated near the C-terminus.

The protein localises to the cell membrane. In Saccharomyces cerevisiae (strain ATCC 204508 / S288c) (Baker's yeast), this protein is Lipid-anchored plasma membrane protein CPP2.